The primary structure comprises 294 residues: Fructose-bisphosphate aldolase class 1 (294 aa).

Glu-176 acts as the Proton acceptor in catalysis. Lys-213 serves as the catalytic Schiff-base intermediate with dihydroxyacetone-P.

The protein belongs to the class I fructose-bisphosphate aldolase family.

The enzyme catalyses beta-D-fructose 1,6-bisphosphate = D-glyceraldehyde 3-phosphate + dihydroxyacetone phosphate. It participates in carbohydrate degradation; glycolysis; D-glyceraldehyde 3-phosphate and glycerone phosphate from D-glucose: step 4/4. The chain is Fructose-bisphosphate aldolase class 1 from Oceanobacillus iheyensis (strain DSM 14371 / CIP 107618 / JCM 11309 / KCTC 3954 / HTE831).